We begin with the raw amino-acid sequence, 147 residues long: uncharacterized protein (147 aa).

Residues 13–35 (NSRINLLGILVLNVVCGKSSIFF) traverse the membrane as a helical segment.

It localises to the membrane. This is an uncharacterized protein from Saccharomyces cerevisiae (strain ATCC 204508 / S288c) (Baker's yeast).